The following is a 151-amino-acid chain: Deoxyuridine 5'-triphosphate nucleotidohydrolase (151 aa).

Residue arginine 28 coordinates Mg(2+). DUTP is bound by residues 72–74 (PRS), 86–89 (GVID), tyrosine 92, glycine 97, isoleucine 99, and arginine 115.

The protein belongs to the dUTPase family. The cofactor is Mg(2+).

It carries out the reaction dUTP + H2O = dUMP + diphosphate + H(+). This enzyme is involved in nucleotide metabolism: it produces dUMP, the immediate precursor of thymidine nucleotides and it decreases the intracellular concentration of dUTP so that uracil cannot be incorporated into DNA. The protein is Deoxyuridine 5'-triphosphate nucleotidohydrolase (OPG046) of Monkeypox virus.